A 147-amino-acid chain; its full sequence is Transcriptional regulator MraZ (147 aa).

SpoVT-AbrB domains follow at residues 5–50 and 79–122; these read AIAL…PLSA and AQEE…SDAG.

This sequence belongs to the MraZ family. As to quaternary structure, forms oligomers.

The protein resides in the cytoplasm. It is found in the nucleoid. This chain is Transcriptional regulator MraZ, found in Aromatoleum aromaticum (strain DSM 19018 / LMG 30748 / EbN1) (Azoarcus sp. (strain EbN1)).